The sequence spans 179 residues: Large ribosomal subunit protein uL5 (179 aa).

It belongs to the universal ribosomal protein uL5 family. In terms of assembly, part of the 50S ribosomal subunit; part of the 5S rRNA/L5/L18/L25 subcomplex. Contacts the 5S rRNA and the P site tRNA. Forms a bridge to the 30S subunit in the 70S ribosome.

Its function is as follows. This is one of the proteins that bind and probably mediate the attachment of the 5S RNA into the large ribosomal subunit, where it forms part of the central protuberance. In the 70S ribosome it contacts protein S13 of the 30S subunit (bridge B1b), connecting the 2 subunits; this bridge is implicated in subunit movement. Contacts the P site tRNA; the 5S rRNA and some of its associated proteins might help stabilize positioning of ribosome-bound tRNAs. This Pseudomonas fluorescens (strain ATCC BAA-477 / NRRL B-23932 / Pf-5) protein is Large ribosomal subunit protein uL5.